A 303-amino-acid chain; its full sequence is Coenzyme PQQ synthesis protein B (303 aa).

It belongs to the PqqB family.

The protein operates within cofactor biosynthesis; pyrroloquinoline quinone biosynthesis. In terms of biological role, may be involved in the transport of PQQ or its precursor to the periplasm. In Pseudomonas putida (strain W619), this protein is Coenzyme PQQ synthesis protein B.